The chain runs to 1377 residues: ATP-dependent helicase/nuclease subunit A (1377 aa).

The 475-residue stretch at 4–478 (TSWTPGQQKV…IDLSKNFRSR (475 aa)) folds into the UvrD-like helicase ATP-binding domain. 25–32 (AAAGSGKT) is a binding site for ATP. Residues 526–867 (FLFSDTKTEL…RIMSIHKSKG (342 aa)) enclose the UvrD-like helicase C-terminal domain. Positions 1036-1065 (FEEESDEQSDEERSDEERSDGEQSDGEQSD) are enriched in acidic residues. A disordered region spans residues 1036 to 1072 (FEEESDEQSDEERSDEERSDGEQSDGEQSDGEQPRKD).

It belongs to the helicase family. AddA subfamily. Heterodimer of AddA and AddB/RexB. Mg(2+) is required as a cofactor.

It carries out the reaction Couples ATP hydrolysis with the unwinding of duplex DNA by translocating in the 3'-5' direction.. The enzyme catalyses ATP + H2O = ADP + phosphate + H(+). In terms of biological role, the heterodimer acts as both an ATP-dependent DNA helicase and an ATP-dependent, dual-direction single-stranded exonuclease. Recognizes the chi site generating a DNA molecule suitable for the initiation of homologous recombination. The AddA nuclease domain is required for chi fragment generation; this subunit has the helicase and 3' -&gt; 5' nuclease activities. This Lachnoclostridium phytofermentans (strain ATCC 700394 / DSM 18823 / ISDg) (Clostridium phytofermentans) protein is ATP-dependent helicase/nuclease subunit A.